The chain runs to 333 residues: Foldase protein PrsA (333 aa).

Residues 1 to 22 (MKKSTKLLAGIVTLASAMTLAA) form the signal peptide. Residue cysteine 23 is the site of N-palmitoyl cysteine attachment. The S-diacylglycerol cysteine moiety is linked to residue cysteine 23. Residues 145 to 240 (TPEMTTQVIT…NKFYIVKVTK (96 aa)) form the PpiC domain. Positions 301–333 (DKKASKANTSKSDQKTSSDSSKDSQSSKSKSEK) are disordered. The span at 312–322 (SDQKTSSDSSK) shows a compositional bias: basic and acidic residues. Over residues 323 to 333 (DSQSSKSKSEK) the composition is skewed to low complexity.

Belongs to the PrsA family.

Its subcellular location is the cell membrane. The enzyme catalyses [protein]-peptidylproline (omega=180) = [protein]-peptidylproline (omega=0). In terms of biological role, plays a major role in protein secretion by helping the post-translocational extracellular folding of several secreted proteins. This Streptococcus equi subsp. zooepidemicus (strain MGCS10565) protein is Foldase protein PrsA.